The primary structure comprises 323 residues: Prostaglandin F synthase 1 (323 aa).

Residues 20–24 and Asp-50 contribute to the NADP(+) site; that span reads GFGTY. The active-site Proton donor is Tyr-55. His-117 is a substrate binding site. Residues 166-167, Gln-190, 216-221, and 270-280 contribute to the NADP(+) site; these read SN, YAALGA, and KSFNKKRIKEN.

This sequence belongs to the aldo/keto reductase family. Monomer. Post-translationally, the N-terminus is blocked.

It localises to the cytoplasm. The catalysed reaction is prostaglandin F2alpha + NADP(+) = prostaglandin D2 + NADPH + H(+). The protein operates within lipid metabolism; prostaglandin biosynthesis. Catalyzes the reduction of PGD(2) and PGH(2) to PGF(2 alpha) and a stereoisomer, respectively. It has a broad substrate specificity and also reduces other carbonyl compounds. The polypeptide is Prostaglandin F synthase 1 (Bos taurus (Bovine)).